Consider the following 651-residue polypeptide: Peptide-N(4)-(N-acetyl-beta-glucosaminyl)asparagine amidase (651 aa).

A2 bears the N-acetylalanine mark. Residues 30–91 (EASKLLLTYA…EGETHLIFPK (62 aa)) enclose the PUB domain. The disordered stretch occupies residues 116 to 153 (SSQKVEFSQHPAAVRLPAEQPEDPTGLMQHSGNQPGQP). A compositionally biased stretch (polar residues) spans 143–152 (MQHSGNQPGQ). Zn(2+) is bound by residues C247, C250, C280, and C283. C306 serves as the catalytic Nucleophile. Residues H333 and D350 contribute to the active site. Residues 451 to 651 (ELGGRVSGSL…LEIIITFSDL (201 aa)) enclose the PAW domain.

Belongs to the transglutaminase-like superfamily. PNGase family. Component of a complex required to couple retrotranslocation, ubiquitination and deglycosylation composed of NGLY1, SAKS1, AMFR, VCP and RAD23B. Interacts with the proteasome components RAD23B and PSMC1. Interacts with directly with VCP. Interacts with DERL1, bringing it close to the endoplasmic reticulum membrane. Interacts with SAKS1. The cofactor is Zn(2+).

It localises to the cytoplasm. It carries out the reaction Hydrolysis of an N(4)-(acetyl-beta-D-glucosaminyl)asparagine residue in which the glucosamine residue may be further glycosylated, to yield a (substituted) N-acetyl-beta-D-glucosaminylamine and a peptide containing an aspartate residue.. With respect to regulation, inhibited by Z-VAD-fmk, a well-known caspase inhibitor, which inhibits enzyme activity through covalent binding of the carbohydrate to the single Cys-306 residue. Specifically deglycosylates the denatured form of N-linked glycoproteins in the cytoplasm and assists their proteasome-mediated degradation. Cleaves the beta-aspartyl-glucosamine (GlcNAc) of the glycan and the amide side chain of Asn, converting Asn to Asp. Prefers proteins containing high-mannose over those bearing complex type oligosaccharides. Can recognize misfolded proteins in the endoplasmic reticulum that are exported to the cytosol to be destroyed and deglycosylate them, while it has no activity toward native proteins. Deglycosylation is a prerequisite for subsequent proteasome-mediated degradation of some, but not all, misfolded glycoproteins. This chain is Peptide-N(4)-(N-acetyl-beta-glucosaminyl)asparagine amidase (Ngly1), found in Rattus norvegicus (Rat).